The primary structure comprises 178 residues: Cytochrome b6-f complex iron-sulfur subunit (178 aa).

A helical membrane pass occupies residues 20-42 (LLTFGTATGVALGALYPVANYFM). Residues 65-161 (KTGWLANHQA…VDVDDDAVLV (97 aa)) enclose the Rieske domain. [2Fe-2S] cluster contacts are provided by Cys107, His109, Cys125, and His128. Cys112 and Cys127 are oxidised to a cystine.

It belongs to the Rieske iron-sulfur protein family. The 4 large subunits of the cytochrome b6-f complex are cytochrome b6, subunit IV (17 kDa polypeptide, PetD), cytochrome f and the Rieske protein, while the 4 small subunits are PetG, PetL, PetM and PetN. The complex functions as a dimer. Requires [2Fe-2S] cluster as cofactor.

It localises to the cellular thylakoid membrane. The enzyme catalyses 2 oxidized [plastocyanin] + a plastoquinol + 2 H(+)(in) = 2 reduced [plastocyanin] + a plastoquinone + 4 H(+)(out). Its function is as follows. Component of the cytochrome b6-f complex, which mediates electron transfer between photosystem II (PSII) and photosystem I (PSI), cyclic electron flow around PSI, and state transitions. This is Cytochrome b6-f complex iron-sulfur subunit from Prochlorococcus marinus (strain MIT 9515).